We begin with the raw amino-acid sequence, 312 residues long: Pantothenate kinase (312 aa).

97 to 104 serves as a coordination point for ATP; sequence GSVAVGKS.

Belongs to the prokaryotic pantothenate kinase family.

The protein localises to the cytoplasm. It carries out the reaction (R)-pantothenate + ATP = (R)-4'-phosphopantothenate + ADP + H(+). It participates in cofactor biosynthesis; coenzyme A biosynthesis; CoA from (R)-pantothenate: step 1/5. This is Pantothenate kinase (coaA) from Mycobacterium leprae (strain TN).